The sequence spans 493 residues: Putative trans-acting regulator SP_1800 (493 aa).

This sequence belongs to the AtxA/AcpA family.

In Streptococcus pneumoniae serotype 4 (strain ATCC BAA-334 / TIGR4), this protein is Putative trans-acting regulator SP_1800.